Reading from the N-terminus, the 493-residue chain is Glutamyl-tRNA(Gln) amidotransferase subunit A (493 aa).

Active-site charge relay system residues include lysine 78 and serine 158. Residue serine 182 is the Acyl-ester intermediate of the active site.

It belongs to the amidase family. GatA subfamily. As to quaternary structure, heterotrimer of A, B and C subunits.

The catalysed reaction is L-glutamyl-tRNA(Gln) + L-glutamine + ATP + H2O = L-glutaminyl-tRNA(Gln) + L-glutamate + ADP + phosphate + H(+). In terms of biological role, allows the formation of correctly charged Gln-tRNA(Gln) through the transamidation of misacylated Glu-tRNA(Gln) in organisms which lack glutaminyl-tRNA synthetase. The reaction takes place in the presence of glutamine and ATP through an activated gamma-phospho-Glu-tRNA(Gln). The protein is Glutamyl-tRNA(Gln) amidotransferase subunit A of Rickettsia rickettsii (strain Iowa).